The primary structure comprises 109 residues: U4-lycotoxin-Ls1c (109 aa).

Positions 1 to 22 (MKVLVLFSVLFLTLFSYSSTEA) are cleaved as a signal peptide. A propeptide spanning residues 23–44 (IDEFDSDAEDDMLSLMANEQVR) is cleaved from the precursor. A knottin domain region spans residues 45–88 (AKACTPRLHDCSHDRHSCCRGELFKDVCYCFYPEGEDITEVCSC). 4 disulfide bridges follow: Cys48-Cys63, Cys55-Cys72, Cys62-Cys88, and Cys74-Cys86. The segment at 89 to 108 (QQPKSHKYIEKVVDKAKTVV) is linear cationic cytotoxin domain.

This sequence belongs to the neurotoxin 19 (CSTX) family. 05 (U4-Lctx) subfamily. In terms of tissue distribution, expressed by the venom gland.

The protein resides in the secreted. Functionally, enhances the high-affinity desensitization of human P2RX3 purinoceptors. The polypeptide is U4-lycotoxin-Ls1c (Lycosa singoriensis (Wolf spider)).